A 453-amino-acid chain; its full sequence is Phenolic glucoside malonyltransferase 1 (453 aa).

His165 functions as the Proton acceptor in the catalytic mechanism. Residues 165–169 carry the HXXXD motif motif; that stretch reads HVAGD. Malonyl-CoA-binding positions include Lys254, His266, and 268–269; that span reads TS. Asp394 acts as the Proton acceptor in catalysis. The short motif at 394-398 is the DFGWG motif element; sequence DFGWG.

Belongs to the plant acyltransferase family. Phenolic glucoside malonyltransferase subfamily. In terms of assembly, monomer. In terms of tissue distribution, highly expressed in flower. Also expressed in flower bud, stem, root and leaf.

The enzyme catalyses a flavonol 3-O-beta-D-glucoside + malonyl-CoA = a flavonol 3-O-(6-O-malonyl-beta-D-glucoside) + CoA. It catalyses the reaction a flavonol 7-O-beta-D-glucoside + malonyl-CoA = a flavonol 7-O-(6-O-malonyl-beta-D-glucoside) + CoA. Malonyltransferase with broad substrate specificity acting on phenolic glucosides including xenobiotic naphthols. Has activity against flavonoid 7-O-glucosides, flavonoid 3-O-glucosides and naphthol glucosides, and to a lesser extent against coumarin glucosides in vitro. Prefers malonyl-CoA as an acyl donor, but also active with succinyl-CoA and methylmalonyl-CoA, but not with acetyl-CoA. This Nicotiana tabacum (Common tobacco) protein is Phenolic glucoside malonyltransferase 1.